We begin with the raw amino-acid sequence, 74 residues long: Translational regulator CsrA (74 aa).

It belongs to the CsrA/RsmA family. In terms of assembly, homodimer. The beta-strands of each monomer intercalate to form a hydrophobic core while the alpha-helices form wings that extend away from the core. Two molecules of FliW interact with 1 homodimer. mRNA and FliW bind to different sites on CsrA.

The protein localises to the cytoplasm. In terms of biological role, a translational regulator that binds mRNA to regulate translation initiation and/or mRNA stability. Usually binds in the 5'-UTR at or near the Shine-Dalgarno sequence preventing ribosome-binding, thus repressing translation. Represses expression of flagellin (hag) in a post-transcriptional fashion. Specifically binds to 2 sites in the 5'-UTR of hag mRNA in a cooperative fashion; the second site overlaps the Shine-Dalgarno sequence and prevents 30S ribosomal subunit binding. Mutation of either binding site abolishes CsrA regulation of hag expression. Repression is greater in the 1A96 than 168 genetic background and higher in minimal than rich medium. Translation repression is antagonized by FliW. Partner switching by flagellin between FliW and CsrA provides a flagellar assembly checkpoint to tightly control the timing of flagellin synthesis. Flagellin binds to assembly factor FliW, freeing CsrA to repress translation of the flagellin mRNA. When the flagellar hook is assembled flagellin is secreted, depleting intracellular flagellin, which frees FliW to interact with CsrA and inhibits CsrA binding to mRNA. This derepresses flagellin translation and provides protein for flagellar assembly. Once the flagellar filament is completed cytoplasmic flagellin levels rise and CsrA translation repression of flagellin reinitiates. Overexpression leads to a dramatic reduction in motility, a significant reduction in flagellin synthesis and reduced flagella assembly. The polypeptide is Translational regulator CsrA (Bacillus subtilis (strain 168)).